We begin with the raw amino-acid sequence, 307 residues long: Mitochondrial brown fat uncoupling protein 1 (307 aa).

Residues 1 to 10 (MVSQTTSEVQ) lie on the Mitochondrial intermembrane side of the membrane. A helical transmembrane segment spans residues 11–32 (PTMGVKIFSAGVAACLADIITF). Solcar repeat units lie at residues 11–102 (PTMG…VQEY), 111–201 (PTLV…MKGA), and 210–295 (DDVP…LKKE). The Mitochondrial matrix portion of the chain corresponds to 33 to 73 (PLDTAKVRLQIQGEGQTSSTIRYKGVLGTITTLAKTEGLPK). Lys-56 provides a ligand contact to fatty acid 16:0. A helical transmembrane segment spans residues 74–96 (LYSGLPAGIQRQISFASLRIGLY). Residues 97 to 116 (DTVQEYFSSGKETPPTLVNR) are Mitochondrial intermembrane-facing. Residues 117–133 (ISAGLMTGGVAVFIGQP) traverse the membrane as a helical segment. Over 134–178 (TEVVKVRLQAQSHLHGIKPRYTGTYNAYRIIATTESLSTLWKGTT) the chain is Mitochondrial matrix. Residues 179 to 195 (PNLLRNVIINCTELVTY) traverse the membrane as a helical segment. At 196 to 212 (DLMKGALVNNQILADDV) the chain is on the mitochondrial intermembrane side. A helical membrane pass occupies residues 213–232 (PCHLLSALVAGFCTTFLASP). Residues 233 to 266 (ADVVKTRFINSLPGQYPSVPSCAMTMFTKEGPTA) are Mitochondrial matrix-facing. Residue Cys-254 is modified to Cysteine sulfenic acid (-SOH). The chain crosses the membrane as a helical span at residues 267-289 (FFKGFVPSFLRLASWNVIMFVCF). Lys-269 contributes to the fatty acid 16:0 binding site. At 290–307 (EQLKKELMKSRQTVDCTT) the chain is on the mitochondrial intermembrane side.

This sequence belongs to the mitochondrial carrier (TC 2.A.29) family. As to quaternary structure, most probably functions as a monomer. Binds one purine nucleotide per monomer. However, has also been suggested to function as a homodimer or a homotetramer. Tightly associates with cardiolipin in the mitochondrion inner membrane; may stabilize and regulate its activity. May undergo sulfenylation upon cold exposure. May increase the sensitivity of UCP1 thermogenic function to the activation by noradrenaline probably through structural effects. Post-translationally, may undergo ubiquitin-mediated proteasomal degradation. Brown adipose tissue.

It is found in the mitochondrion inner membrane. It catalyses the reaction H(+)(in) = H(+)(out). With respect to regulation, has no constitutive proton transporter activity and has to be activated by long-chain fatty acids/LCFAs. Inhibited by purine nucleotides. Both purine nucleotides and LCFAs bind the cytosolic side of the transporter and directly compete to activate or inhibit it. Activated by noradrenaline and reactive oxygen species. Despite lacking canonical translational encoding for selenocysteine, a small pool of the protein has been observed to selectively incorporate selenocysteine at 'Cys-254'. Selenocysteine-modified protein is highly sensitive to redox modification and may constitute a pool of protein highly sensitive to activation by elevated levels of reactive oxygen species (ROS). Its function is as follows. Mitochondrial protein responsible for thermogenic respiration, a specialized capacity of brown adipose tissue and beige fat that participates in non-shivering adaptive thermogenesis to temperature and diet variations and more generally to the regulation of energy balance. Functions as a long-chain fatty acid/LCFA and proton symporter, simultaneously transporting one LCFA and one proton through the inner mitochondrial membrane. However, LCFAs remaining associated with the transporter via their hydrophobic tails, it results in an apparent transport of protons activated by LCFAs. Thereby, dissipates the mitochondrial proton gradient and converts the energy of substrate oxydation into heat instead of ATP. Regulates the production of reactive oxygen species/ROS by mitochondria. This Phodopus sungorus (Striped hairy-footed hamster) protein is Mitochondrial brown fat uncoupling protein 1.